Here is a 227-residue protein sequence, read N- to C-terminus: Nucleoside triphosphate pyrophosphatase (227 aa).

Catalysis depends on Asp77, which acts as the Proton acceptor.

It belongs to the Maf family. Requires a divalent metal cation as cofactor.

The protein resides in the cytoplasm. The enzyme catalyses a ribonucleoside 5'-triphosphate + H2O = a ribonucleoside 5'-phosphate + diphosphate + H(+). It carries out the reaction a 2'-deoxyribonucleoside 5'-triphosphate + H2O = a 2'-deoxyribonucleoside 5'-phosphate + diphosphate + H(+). In terms of biological role, nucleoside triphosphate pyrophosphatase. May have a dual role in cell division arrest and in preventing the incorporation of modified nucleotides into cellular nucleic acids. In Rickettsia typhi (strain ATCC VR-144 / Wilmington), this protein is Nucleoside triphosphate pyrophosphatase.